The primary structure comprises 274 residues: Oxidized low-density lipoprotein receptor 1 (274 aa).

The segment covering 1-16 (MAVDDLKVKPMKDQPD) has biased composition (basic and acidic residues). The tract at residues 1–25 (MAVDDLKVKPMKDQPDQKSNGKKPK) is disordered. At 1-31 (MAVDDLKVKPMKDQPDQKSNGKKPKGLRFLS) the chain is on the cytoplasmic side. A helical; Signal-anchor for type II membrane protein transmembrane segment spans residues 32-54 (SPWWCPAAVALGVLCLGSLMTII). Residues C36 and C46 are each lipidated (S-palmitoyl cysteine). The interval 55 to 150 (MLGMQLLQVS…SGPCPEDWLW (96 aa)) is neck. Residues 55 to 274 (MLGMQLLQVS…QKKANLLRSE (220 aa)) lie on the Extracellular side of the membrane. N73 and N139 each carry an N-linked (GlcNAc...) asparagine glycan. Positions 84 to 139 (QVLAQQQAEAASQESQRELKEMIETLAKRLDEKSKKQMELNHQYLNLQEALKRMDN) form a coiled coil. Intrachain disulfides connect C144-C155, C172-C264, and C243-C256. Residues 151–265 (HGKNCYLFSS…CILVAYSICQ (115 aa)) enclose the C-type lectin domain.

As to quaternary structure, homodimer; disulfide-linked. May form a hexamer composed of 3 homodimers. Interacts with HSP70. In terms of processing, N-glycosylated.

It localises to the cell membrane. It is found in the membrane raft. Its subcellular location is the secreted. In terms of biological role, receptor that mediates the recognition, internalization and degradation of oxidatively modified low density lipoprotein (oxLDL) by vascular endothelial cells. OxLDL is a marker of atherosclerosis that induces vascular endothelial cell activation and dysfunction, resulting in pro-inflammatory responses, pro-oxidative conditions and apoptosis. Its association with oxLDL induces the activation of NF-kappa-B through an increased production of intracellular reactive oxygen and a variety of pro-atherogenic cellular responses including a reduction of nitric oxide (NO) release, monocyte adhesion and apoptosis. In addition to binding oxLDL, it acts as a receptor for the HSP70 protein involved in antigen cross-presentation to naive T-cells in dendritic cells, thereby participating in cell-mediated antigen cross-presentation. Also involved in inflammatory process, by acting as a leukocyte-adhesion molecule at the vascular interface in endotoxin-induced inflammation. Also acts as a receptor for advanced glycation end (AGE) products, activated platelets, monocytes, apoptotic cells and both Gram-negative and Gram-positive bacteria. The sequence is that of Oxidized low-density lipoprotein receptor 1 (OLR1) from Oryctolagus cuniculus (Rabbit).